A 279-amino-acid chain; its full sequence is Very long chain fatty acid elongase 1 (279 aa).

M1 is subject to N-acetylmethionine. A run of 7 helical transmembrane segments spans residues 23–43 (PLMGSPLLMTSILLTYVYFVL), 61–81 (FMIVYNFSLVALSLYIVYEFL), 110–130 (VAWLFLFSKFIELMDTVIFIL), 137–154 (VTFLHVFHHSVLPWSWWW), 176–196 (VIMYLYYGLSAFGPVAQPYLW), 201–221 (MTAIQLIQFVLVSLHISQYYF), and 231–251 (VIIHLIWMYGTIFFMLFSNFW). Residues 275–279 (KVKAN) carry the Di-lysine motif motif.

Belongs to the ELO family. ELOVL1 subfamily. As to quaternary structure, interacts with LASS2 and HSD17B12. Interacts with TECR. Ubiquitous.

Its subcellular location is the endoplasmic reticulum membrane. It carries out the reaction a very-long-chain acyl-CoA + malonyl-CoA + H(+) = a very-long-chain 3-oxoacyl-CoA + CO2 + CoA. The enzyme catalyses eicosanoyl-CoA + malonyl-CoA + H(+) = 3-oxodocosanoyl-CoA + CO2 + CoA. The catalysed reaction is (11Z)-eicosenoyl-CoA + malonyl-CoA + H(+) = 3-oxo-(13Z)-docosenoyl-CoA + CO2 + CoA. It catalyses the reaction docosanoyl-CoA + malonyl-CoA + H(+) = 3-oxotetracosanoyl-CoA + CO2 + CoA. It carries out the reaction (13Z)-docosenoyl-CoA + malonyl-CoA + H(+) = 3-oxo-(15Z)-tetracosenoyl-CoA + CO2 + CoA. The enzyme catalyses tetracosanoyl-CoA + malonyl-CoA + H(+) = 3-oxohexacosanoyl-CoA + CO2 + CoA. The catalysed reaction is hexacosanoyl-CoA + malonyl-CoA + H(+) = 3-oxooctacosanyol-CoA + CO2 + CoA. It catalyses the reaction octadecanoyl-CoA + malonyl-CoA + H(+) = 3-oxoeicosanoyl-CoA + CO2 + CoA. The protein operates within lipid metabolism; fatty acid biosynthesis. Catalyzes the first and rate-limiting reaction of the four reactions that constitute the long-chain fatty acids elongation cycle. This endoplasmic reticulum-bound enzymatic process allows the addition of 2 carbons to the chain of long- and very long-chain fatty acids (VLCFAs) per cycle. Condensing enzyme that exhibits activity toward saturated and monounsaturated acyl-CoA substrates, with the highest activity towards C22:0 acyl-CoA. May participate in the production of both saturated and monounsaturated VLCFAs of different chain lengths that are involved in multiple biological processes as precursors of membrane lipids and lipid mediators. Important for saturated C24:0 and monounsaturated C24:1 sphingolipid synthesis. Indirectly inhibits RPE65 via production of VLCFAs. This chain is Very long chain fatty acid elongase 1, found in Homo sapiens (Human).